A 227-amino-acid polypeptide reads, in one-letter code: uncharacterized protein (227 aa).

Residues 52-100 (NKRAKLYRERNKAKLKEKQHKWYHKGGGKEHKKLYDKINLEKSNMRDKN) are a coiled coil.

Belongs to the mimivirus L246/L426 family.

This is an uncharacterized protein from Acanthamoeba polyphaga mimivirus (APMV).